Consider the following 292-residue polypeptide: AKT-interacting protein (292 aa).

Polar residues predominate over residues 1 to 11 (MNPFWSMSTSS). The interval 1–63 (MNPFWSMSTS…TSPAPAAQST (63 aa)) is disordered. A compositionally biased stretch (basic and acidic residues) spans 14–23 (KRSEGEEKTL). Phosphoserine is present on Ser-30. The UBC core domain occupies 74 to 222 (YLEYSLLAEF…VVDSVKVCTA (149 aa)).

The protein belongs to the ubiquitin-conjugating enzyme family. FTS subfamily. As to quaternary structure, component of the FTS/Hook/FHIP complex (FHF complex), composed of AKTIP/FTS, FHIP1B, and one or more members of the Hook family of proteins HOOK1, HOOK2, and HOOK3. Interacts directly with HOOK1, HOOK2 and HOOK3. The FHF complex associates with the homotypic vesicular sorting complex (the HOPS complex). Also interacts with AKT1. May interact with FHIP1A.

It is found in the cytoplasm. Its subcellular location is the cell membrane. Component of the FTS/Hook/FHIP complex (FHF complex). The FHF complex may function to promote vesicle trafficking and/or fusion via the homotypic vesicular protein sorting complex (the HOPS complex). Regulates apoptosis by enhancing phosphorylation and activation of AKT1. Increases release of TNFSF6 via the AKT1/GSK3B/NFATC1 signaling cascade. FHF complex promotes the distribution of AP-4 complex to the perinuclear area of the cell. The protein is AKT-interacting protein of Homo sapiens (Human).